A 1429-amino-acid polypeptide reads, in one-letter code: Dicer-like protein 2 (1429 aa).

One can recognise a Helicase ATP-binding domain in the interval 21–200; that stretch reads MFEASLKGNI…TIEMNLNSVC (180 aa). 34–41 is an ATP binding site; sequence MGTGSGKT. The DEAH box motif lies at 141 to 144; sequence DEAH. The region spanning 335–501 is the Helicase C-terminal domain; it reads ALISFLMSTE…EDRRRTEELR (167 aa). The region spanning 528–622 is the Dicer dsRNA-binding fold domain; sequence AMQHLVHFCD…LPLTKSREFT (95 aa). RNase III domains follow at residues 874–1014 and 1056–1250; these read ATRL…IDGG and QENL…VDSG. Residues Glu1095, Asp1236, and Glu1239 each coordinate Mg(2+).

This sequence belongs to the helicase family. Dicer subfamily. Requires Mg(2+) as cofactor. It depends on Mn(2+) as a cofactor.

Functionally, dicer-like endonuclease involved in cleaving double-stranded RNA in the RNA interference (RNAi) pathway. Produces 21 to 25 bp dsRNAs (siRNAs) which target the selective destruction of homologous RNAs leading to sequence-specific suppression of gene expression, called post-transcriptional gene silencing (PTGS). Part of a broad host defense response against viral infection and transposons. The sequence is that of Dicer-like protein 2 (dcl2) from Emericella nidulans (strain FGSC A4 / ATCC 38163 / CBS 112.46 / NRRL 194 / M139) (Aspergillus nidulans).